The primary structure comprises 465 residues: Hydroxyacid-oxoacid transhydrogenase, mitochondrial (465 aa).

It belongs to the iron-containing alcohol dehydrogenase family. Hydroxyacid-oxoacid transhydrogenase subfamily.

Its subcellular location is the mitochondrion. It catalyses the reaction (S)-3-hydroxybutanoate + 2-oxoglutarate = (R)-2-hydroxyglutarate + acetoacetate. The catalysed reaction is 4-hydroxybutanoate + 2-oxoglutarate = (R)-2-hydroxyglutarate + succinate semialdehyde. In terms of biological role, catalyzes the cofactor-independent reversible oxidation of gamma-hydroxybutyrate (GHB) to succinic semialdehyde (SSA) coupled to reduction of 2-ketoglutarate (2-KG) to D-2-hydroxyglutarate (D-2-HG). L-3-hydroxybutyrate (L-3-OHB) is also a substrate for HOT when using 2-KG as hydrogen acceptor, resulting in the formation of D-2-HG. This Caenorhabditis briggsae protein is Hydroxyacid-oxoacid transhydrogenase, mitochondrial.